The chain runs to 106 residues: Large ribosomal subunit protein bL21 (106 aa).

This sequence belongs to the bacterial ribosomal protein bL21 family. As to quaternary structure, part of the 50S ribosomal subunit. Contacts protein L20.

Functionally, this protein binds to 23S rRNA in the presence of protein L20. This chain is Large ribosomal subunit protein bL21, found in Xanthomonas oryzae pv. oryzae (strain MAFF 311018).